A 1116-amino-acid polypeptide reads, in one-letter code: uncharacterized protein (1116 aa).

The helical transmembrane segment at 3–20 (FFLTFLLFLFTLFSLFVY) threads the bilayer.

The protein resides in the membrane. This is an uncharacterized protein from Aquifex aeolicus (strain VF5).